An 858-amino-acid chain; its full sequence is Leucine--tRNA ligase (858 aa).

Positions 42-52 (PYPSGRLHMGH) match the 'HIGH' region motif. The 'KMSKS' region motif lies at 618 to 622 (KMSKS). Lys-621 is an ATP binding site.

This sequence belongs to the class-I aminoacyl-tRNA synthetase family.

It localises to the cytoplasm. The catalysed reaction is tRNA(Leu) + L-leucine + ATP = L-leucyl-tRNA(Leu) + AMP + diphosphate. The polypeptide is Leucine--tRNA ligase (Aliivibrio fischeri (strain ATCC 700601 / ES114) (Vibrio fischeri)).